The chain runs to 184 residues: DOMON domain-containing protein CBG21755 (184 aa).

A signal peptide spans 1–20; it reads MIVPISLLFLFLSFVPFSYS. The DOMON domain maps to 28 to 145; the sequence is EVASMSWMVK…CVNWIVVPGG (118 aa). The N-linked (GlcNAc...) asparagine glycan is linked to asparagine 49.

It is found in the secreted. This is DOMON domain-containing protein CBG21755 from Caenorhabditis briggsae.